A 263-amino-acid polypeptide reads, in one-letter code: Sepiapterin reductase (263 aa).

Residues 18-24 (GASRGFG), 46-47 (RT), and 73-74 (DL) contribute to the NADP(+) site. Substrate-binding positions include 160–161 (SL) and tyrosine 173. An NADP(+)-binding site is contributed by lysine 177. Glycine 202 provides a ligand contact to substrate. 204–209 (LDTDMH) lines the NADP(+) pocket. Aspartate 260 lines the substrate pocket.

Belongs to the sepiapterin reductase family. In terms of assembly, homodimer.

It is found in the cytoplasm. It catalyses the reaction L-erythro-7,8-dihydrobiopterin + NADP(+) = L-sepiapterin + NADPH + H(+). It carries out the reaction (6R)-L-erythro-5,6,7,8-tetrahydrobiopterin + 2 NADP(+) = 6-pyruvoyl-5,6,7,8-tetrahydropterin + 2 NADPH + 2 H(+). In terms of biological role, catalyzes the final one or two reductions in tetra-hydrobiopterin biosynthesis to form 5,6,7,8-tetrahydrobiopterin. In Xenopus laevis (African clawed frog), this protein is Sepiapterin reductase (spr).